A 42-amino-acid polypeptide reads, in one-letter code: MADKPDLGEINSFDKAKLKKTETQEKNTLPTKETIEQEKQAK.

Basic and acidic residues-rich tracts occupy residues 1–25 (MADKPDLGEINSFDKAKLKKTETQE) and 33–42 (ETIEQEKQAK). Residues 1-42 (MADKPDLGEINSFDKAKLKKTETQEKNTLPTKETIEQEKQAK) form a disordered region. Ala2 carries the N-acetylalanine modification. Lys4 bears the N6-acetyllysine mark. Residue Ser12 is modified to Phosphoserine. Lys15 is subject to N6-acetyllysine. Thr21, Thr23, and Thr34 each carry phosphothreonine. Lys39 carries the N6-acetyllysine modification.

Belongs to the thymosin beta family. In terms of tissue distribution, distributed in numerous types of tissues, including thymus, spleen, lung, liver and muscle.

Its subcellular location is the cytoplasm. The protein localises to the cytoskeleton. Plays an important role in the organization of the cytoskeleton. Binds to and sequesters actin monomers (G actin) and therefore inhibits actin polymerization. In Bos taurus (Bovine), this protein is Thymosin beta-10 (TMSB10).